We begin with the raw amino-acid sequence, 275 residues long: MANFTAADVKELRDRLGAGMMDSKNALVEADGDIEKAIEILRLKGQKGNAKRGDRSTAEGLVAASTQDGAATLIELACETDFVAKNDKFIALSESVLAAVVAAGASTVEEALQAPAGEQTVDQLISDQAAILGEKIALRRVARLAGEHQEVYLHRTSKDLPPQVGVVVDYSGTDAETARSIAQHIAFANPEYLAREDVPADKVEAERAIVTEISRNEGKPEAALPKIIEGRLTGFFKQVALLEQDYAKDNKQSVKKVVEAAGLTVTGFARFKVGA.

The segment at 80–83 is involved in Mg(2+) ion dislocation from EF-Tu; it reads TDFV.

This sequence belongs to the EF-Ts family.

It is found in the cytoplasm. Its function is as follows. Associates with the EF-Tu.GDP complex and induces the exchange of GDP to GTP. It remains bound to the aminoacyl-tRNA.EF-Tu.GTP complex up to the GTP hydrolysis stage on the ribosome. In Clavibacter michiganensis subsp. michiganensis (strain NCPPB 382), this protein is Elongation factor Ts.